Here is a 508-residue protein sequence, read N- to C-terminus: Lysine--tRNA ligase (508 aa).

Positions 418 and 425 each coordinate Mg(2+).

It belongs to the class-II aminoacyl-tRNA synthetase family. Homodimer. Requires Mg(2+) as cofactor.

Its subcellular location is the cytoplasm. The enzyme catalyses tRNA(Lys) + L-lysine + ATP = L-lysyl-tRNA(Lys) + AMP + diphosphate. This is Lysine--tRNA ligase from Burkholderia pseudomallei (strain 1710b).